An 86-amino-acid polypeptide reads, in one-letter code: OMEGA-stichotoxin-Shd4a (86 aa).

Residues 1 to 23 (MASFRTLFACVVILCCVLWSSMA) form the signal peptide. A propeptide spanning residues 24–36 (RYGEDMEVETEMN) is cleaved from the precursor. An EGF-like domain is found at 40–82 (EGVRCTGQHASSFCLNGGTCRHIASLGEYYCICPGDYTGHRCD). 3 cysteine pairs are disulfide-bonded: Cys-44–Cys-59, Cys-53–Cys-70, and Cys-72–Cys-81.

It belongs to the EGF domain peptide family.

Its subcellular location is the secreted. It localises to the nematocyst. Functionally, has both toxic and EGF activity. Its EGF activity consists of rounding cells (morphological change) and inducing tyrosine phosphorylation of the EGFR in A431 cells, but with a lower potency that human EGF. The chain is OMEGA-stichotoxin-Shd4a from Stichodactyla haddoni (Saddle carpet anemone).